Reading from the N-terminus, the 74-residue chain is uncharacterized protein (74 aa).

This is an uncharacterized protein from Sinorhizobium fredii (strain NBRC 101917 / NGR234).